Reading from the N-terminus, the 222-residue chain is MGLFGKTQEKPPKELVNEWSLKIRKEMRVVDRQIRDIQREEEKVKRSVKDAAKKGQKDVCVVLAKEMIRSRKAVSKLYASKAHMNSVLMGMKNQLAVLRVAGSLQKSTEVMKAMQSLVKIPEIQATMRELSKEMMKAGIIEEMLEDTFESMDDQEEMEEAAEMEIDRILFEITAGALGKAPSKVTDALPEPEPLGAMAASEDEEEEEEALEAMQSRLATLRS.

A lipid anchor (N-myristoyl glycine) is attached at glycine 2. Positions glycine 2–alanine 113 are intramolecular interaction with C-terminus. A coiled-coil region spans residues lysine 22–lysine 54. Important for autoinhibitory function stretches follow at residues valine 59–alanine 64 and isoleucine 168–leucine 169. Positions glutamate 149–serine 222 form a coiled coil. The intramolecular interaction with N-terminus stretch occupies residues methionine 151 to leucine 220. Positions methionine 151–serine 222 are interaction with VPS4A. Residue lysine 179 forms a Glycyl lysine isopeptide (Lys-Gly) (interchain with G-Cter in ubiquitin) linkage. Residues alanine 180–serine 222 form a disordered region. 3 interaction with STAMBP regions span residues alanine 196–serine 222, glutamate 203–glutamate 207, and arginine 221–serine 222. Phosphoserine is present on serine 200. Over residues serine 200 to leucine 210 the composition is skewed to acidic residues. The MIT-interacting motif signature appears at glutamate 201–glutamate 211.

It belongs to the SNF7 family. In terms of assembly, probable core component of the endosomal sorting required for transport complex III (ESCRT-III). ESCRT-III components are thought to multimerize to form a flat lattice on the perimeter membrane of the endosome. Several assembly forms of ESCRT-III may exist that interact and act sequentially. Forms a metastable monomer in solution; its core structure (without part of the putative autoinhibitory C-terminal acidic region) oligomerizes into a flat lattice via two different dimerization interfaces. In vitro, heteromerizes with CHMP2A (but not CHMP4) to form helical tubular structures that expose membrane-interacting sites on the outside whereas VPS4B can associate on the inside of the tubule. May interact with IGFBP7; the relevance of such interaction however remains unclear. Interacts with CHMP2A. Interacts with CHMP4A; the interaction requires the release of CHMP4A autoinhibition. Interacts with VPS4A. Interacts with STAMBP; the interaction appears to relieve the autoinhibition of CHMP3. Interacts with VTA1.

The protein localises to the cytoplasm. The protein resides in the cytosol. It is found in the membrane. It localises to the endosome. Its subcellular location is the late endosome membrane. Probable core component of the endosomal sorting required for transport complex III (ESCRT-III) which is involved in multivesicular bodies (MVBs) formation and sorting of endosomal cargo proteins into MVBs. MVBs contain intraluminal vesicles (ILVs) that are generated by invagination and scission from the limiting membrane of the endosome and mostly are delivered to lysosomes enabling degradation of membrane proteins, such as stimulated growth factor receptors, lysosomal enzymes and lipids. The MVB pathway appears to require the sequential function of ESCRT-O, -I,-II and -III complexes. ESCRT-III proteins mostly dissociate from the invaginating membrane before the ILV is released. The ESCRT machinery also functions in topologically equivalent membrane fission events, such as the terminal stages of cytokinesis and the budding of enveloped viruses (lentiviruses). ESCRT-III proteins are believed to mediate the necessary vesicle extrusion and/or membrane fission activities, possibly in conjunction with the AAA ATPase VPS4. Selectively binds to phosphatidylinositol 3,5-bisphosphate PtdIns(3,5)P2 and PtdIns(3,4)P2 in preference to other phosphoinositides tested. Involved in late stages of cytokinesis. Plays a role in endosomal sorting/trafficking of EGF receptor. This chain is Charged multivesicular body protein 3 (CHMP3), found in Bos taurus (Bovine).